We begin with the raw amino-acid sequence, 242 residues long: MKRSKTLRAADAKVDREKLYAPLEAVRLAKETSTTKFDATVEVAFRLGVDPRKADQMVRGTVNLPHGTGKTARVLVFATGDRAAAAEAAGADIVGDDELINEIAKGNRLNEFDAVVATPDLMGKVGRLGRVLGPRGLMPNPKTGTVTMDVAKAVTDIKGGKIEFRVDKHSNLHFIIGKVSFSDEQLVENYAAALDEIVRLKPSAAKGRYIKKAALSTTMGPGIQLDSNRTRNLLVEEDPAAV.

It belongs to the universal ribosomal protein uL1 family. Part of the 50S ribosomal subunit.

Binds directly to 23S rRNA. The L1 stalk is quite mobile in the ribosome, and is involved in E site tRNA release. Its function is as follows. Protein L1 is also a translational repressor protein, it controls the translation of the L11 operon by binding to its mRNA. The sequence is that of Large ribosomal subunit protein uL1 from Streptomyces sp. (strain FRI-5).